The following is a 240-amino-acid chain: MAQVSMRDMINAGVHFGHQTRYWNPQMKPFIFGARNGVHIINLEKTLPLFNEALAELTRIASNNGKVLFVGTKRAASEAVQAAALDCQQYYVNHRWLGGMLTNWKTVRQSIKRLKDLETQSQDGTFDKLTKKEALMRSREMEKLELSLGGIKDMGGLPDALFVIGADHEHIAVKEANNLGIPVFAIVDTNSTPAGVDFVIPGNDDATRAIQLYVSAAAAAVKEGRGNEAQVAEELAADAE.

Belongs to the universal ribosomal protein uS2 family.

The sequence is that of Small ribosomal subunit protein uS2 from Haemophilus influenzae (strain 86-028NP).